The following is a 342-amino-acid chain: N-acetyl-gamma-glutamyl-phosphate reductase (342 aa).

The active site involves Cys-149.

The protein belongs to the NAGSA dehydrogenase family. Type 1 subfamily.

Its subcellular location is the cytoplasm. The enzyme catalyses N-acetyl-L-glutamate 5-semialdehyde + phosphate + NADP(+) = N-acetyl-L-glutamyl 5-phosphate + NADPH + H(+). It participates in amino-acid biosynthesis; L-arginine biosynthesis; N(2)-acetyl-L-ornithine from L-glutamate: step 3/4. Its function is as follows. Catalyzes the NADPH-dependent reduction of N-acetyl-5-glutamyl phosphate to yield N-acetyl-L-glutamate 5-semialdehyde. The chain is N-acetyl-gamma-glutamyl-phosphate reductase from Ruegeria pomeroyi (strain ATCC 700808 / DSM 15171 / DSS-3) (Silicibacter pomeroyi).